A 160-amino-acid polypeptide reads, in one-letter code: Prorelaxin (160 aa).

3 disulfide bridges follow: cysteine 10-cysteine 147, cysteine 22-cysteine 160, and cysteine 146-cysteine 151. The propeptide at 34 to 133 is connecting peptide; sequence QEKQRILGSG…KDFNLNIYSP (100 aa).

This sequence belongs to the insulin family. In terms of assembly, heterodimer of a B chain and an A chain linked by two disulfide bonds. In terms of tissue distribution, expressed in the endometrium during pregnancy and in mammary gland during lactation.

It is found in the secreted. Relaxin is an ovarian hormone that acts with estrogen to produce dilatation of the birth canal in many mammals. It bears mature young, and allows separation of the pelvic bones. This is Prorelaxin (RLN) from Cavia porcellus (Guinea pig).